The primary structure comprises 345 residues: Phosphoribosylformylglycinamidine cyclo-ligase (345 aa).

The protein belongs to the AIR synthase family.

Its subcellular location is the cytoplasm. It catalyses the reaction 2-formamido-N(1)-(5-O-phospho-beta-D-ribosyl)acetamidine + ATP = 5-amino-1-(5-phospho-beta-D-ribosyl)imidazole + ADP + phosphate + H(+). The protein operates within purine metabolism; IMP biosynthesis via de novo pathway; 5-amino-1-(5-phospho-D-ribosyl)imidazole from N(2)-formyl-N(1)-(5-phospho-D-ribosyl)glycinamide: step 2/2. The protein is Phosphoribosylformylglycinamidine cyclo-ligase of Escherichia coli O7:K1 (strain IAI39 / ExPEC).